A 415-amino-acid polypeptide reads, in one-letter code: Serine hydroxymethyltransferase 1 (415 aa).

(6S)-5,6,7,8-tetrahydrofolate contacts are provided by residues Leu122 and 126 to 128 (GHL). Residue Lys230 is modified to N6-(pyridoxal phosphate)lysine.

This sequence belongs to the SHMT family. As to quaternary structure, homodimer. It depends on pyridoxal 5'-phosphate as a cofactor.

It is found in the cytoplasm. The enzyme catalyses (6R)-5,10-methylene-5,6,7,8-tetrahydrofolate + glycine + H2O = (6S)-5,6,7,8-tetrahydrofolate + L-serine. Its pathway is one-carbon metabolism; tetrahydrofolate interconversion. It participates in amino-acid biosynthesis; glycine biosynthesis; glycine from L-serine: step 1/1. Catalyzes the reversible interconversion of serine and glycine with tetrahydrofolate (THF) serving as the one-carbon carrier. This reaction serves as the major source of one-carbon groups required for the biosynthesis of purines, thymidylate, methionine, and other important biomolecules. Also exhibits THF-independent aldolase activity toward beta-hydroxyamino acids, producing glycine and aldehydes, via a retro-aldol mechanism. The sequence is that of Serine hydroxymethyltransferase 1 from Burkholderia mallei (strain ATCC 23344).